A 493-amino-acid chain; its full sequence is Probable cytosol aminopeptidase (493 aa).

2 residues coordinate Mn(2+): Lys-257 and Asp-262. Lys-269 is a catalytic residue. Positions 280, 339, and 341 each coordinate Mn(2+). Arg-343 is an active-site residue.

Belongs to the peptidase M17 family. Mn(2+) serves as cofactor.

It is found in the cytoplasm. The catalysed reaction is Release of an N-terminal amino acid, Xaa-|-Yaa-, in which Xaa is preferably Leu, but may be other amino acids including Pro although not Arg or Lys, and Yaa may be Pro. Amino acid amides and methyl esters are also readily hydrolyzed, but rates on arylamides are exceedingly low.. It carries out the reaction Release of an N-terminal amino acid, preferentially leucine, but not glutamic or aspartic acids.. In terms of biological role, presumably involved in the processing and regular turnover of intracellular proteins. Catalyzes the removal of unsubstituted N-terminal amino acids from various peptides. This Aquifex aeolicus (strain VF5) protein is Probable cytosol aminopeptidase (pepA).